The following is an 805-amino-acid chain: Pentatricopeptide repeat-containing protein At4g01570 (805 aa).

16 PPR repeats span residues 91–125, 126–160, 161–196, 211–241, 247–277, 288–322, 323–357, 358–392, 393–427, 428–462, 463–497, 593–627, 629–663, 664–698, 699–733, and 734–768; these read SATA…GVNL, DQTM…GDCL, NPSV…DNHS, GTVA…LKGM, DTWS…MKER, DICT…GHEP, DNST…GFVP, DTIV…GVRA, SCWT…GQFV, DAIT…GFSV, DLVT…NLVP, DVDM…GVTD, TSYT…FCAA, DIAT…GGYL, DIVM…GINP, and DVVS…GCLP.

This sequence belongs to the PPR family. P subfamily.

In Arabidopsis thaliana (Mouse-ear cress), this protein is Pentatricopeptide repeat-containing protein At4g01570.